The primary structure comprises 129 residues: MAKTPVRARKRVKKQVVDGVAHIHASFNNTIVTITDRQGNALAWATAGGSGFRGSRKSTPFAAQVAAERCAEMVKEFGLKNLEVMVKGPGPGRESTIRALNAAGFRITNITDVTPIPHNGCRPPKKRRV.

Belongs to the universal ribosomal protein uS11 family. Part of the 30S ribosomal subunit. Interacts with proteins S7 and S18. Binds to IF-3.

Its function is as follows. Located on the platform of the 30S subunit, it bridges several disparate RNA helices of the 16S rRNA. Forms part of the Shine-Dalgarno cleft in the 70S ribosome. The polypeptide is Small ribosomal subunit protein uS11 (Actinobacillus succinogenes (strain ATCC 55618 / DSM 22257 / CCUG 43843 / 130Z)).